The chain runs to 360 residues: Ubiquitin carboxyl-terminal hydrolase MIY1 (360 aa).

C28 acts as the Nucleophile in catalysis. H216 (proton acceptor) is an active-site residue. Positions K317–M360 are disordered. 2 stretches are compositionally biased toward basic and acidic residues: residues K325–K335 and A349–M360.

It belongs to the MINDY deubiquitinase family. FAM63 subfamily.

The protein resides in the cytoplasm. It catalyses the reaction Thiol-dependent hydrolysis of ester, thioester, amide, peptide and isopeptide bonds formed by the C-terminal Gly of ubiquitin (a 76-residue protein attached to proteins as an intracellular targeting signal).. Its function is as follows. Hydrolase that can specifically remove 'Lys-48'-linked conjugated ubiquitin from proteins. Has endodeubiquitinase activity. The protein is Ubiquitin carboxyl-terminal hydrolase MIY1 of Saccharomyces cerevisiae (strain ATCC 204508 / S288c) (Baker's yeast).